The following is an 805-amino-acid chain: Phenylalanine--tRNA ligase beta subunit (805 aa).

A tRNA-binding domain is found at 40–162 (FKNPDYLQLG…NRDEFGDYLS (123 aa)). Residues 412–486 (AFNRKIYLNF…KILDLNKIKE (75 aa)) form the B5 domain. Mg(2+) is bound by residues Asp-464, Asp-470, Glu-473, and Glu-474.

This sequence belongs to the phenylalanyl-tRNA synthetase beta subunit family. Type 1 subfamily. In terms of assembly, tetramer of two alpha and two beta subunits. Mg(2+) serves as cofactor.

It localises to the cytoplasm. The enzyme catalyses tRNA(Phe) + L-phenylalanine + ATP = L-phenylalanyl-tRNA(Phe) + AMP + diphosphate + H(+). The polypeptide is Phenylalanine--tRNA ligase beta subunit (pheT) (Mycoplasma pneumoniae (strain ATCC 29342 / M129 / Subtype 1) (Mycoplasmoides pneumoniae)).